The sequence spans 185 residues: Thiol:disulfide interchange protein DsbE (185 aa).

At 1-4 (MKRN) the chain is on the cytoplasmic side. The chain crosses the membrane as a helical span at residues 5–25 (VLLLPLLIFLLIAAALLWQLA). Residues 26–185 (RNAQGDDPTN…WDRYSREAAQ (160 aa)) are Periplasmic-facing. The region spanning 39 to 177 (ALTGKPVPAF…WESELKPLWD (139 aa)) is the Thioredoxin domain. Cys-80 and Cys-83 are oxidised to a cystine.

This sequence belongs to the thioredoxin family. DsbE subfamily.

The protein localises to the cell inner membrane. In terms of biological role, involved in disulfide bond formation. Catalyzes a late, reductive step in the assembly of periplasmic c-type cytochromes, probably the reduction of disulfide bonds of the apocytochrome c to allow covalent linkage with the heme. Possible subunit of a heme lyase. This Salmonella typhi protein is Thiol:disulfide interchange protein DsbE (dsbE1).